The chain runs to 131 residues: Small ribosomal subunit protein uS8 (131 aa).

Belongs to the universal ribosomal protein uS8 family. Part of the 30S ribosomal subunit. Contacts proteins S5 and S12.

One of the primary rRNA binding proteins, it binds directly to 16S rRNA central domain where it helps coordinate assembly of the platform of the 30S subunit. The protein is Small ribosomal subunit protein uS8 of Dehalococcoides mccartyi (strain CBDB1).